The sequence spans 280 residues: Large ribosomal subunit protein uL2 (280 aa).

Residues 215–280 form a disordered region; sequence GRRPHVRGSA…IQRANDKKEK (66 aa).

Belongs to the universal ribosomal protein uL2 family. Part of the 50S ribosomal subunit. Forms a bridge to the 30S subunit in the 70S ribosome.

In terms of biological role, one of the primary rRNA binding proteins. Required for association of the 30S and 50S subunits to form the 70S ribosome, for tRNA binding and peptide bond formation. It has been suggested to have peptidyltransferase activity; this is somewhat controversial. Makes several contacts with the 16S rRNA in the 70S ribosome. The sequence is that of Large ribosomal subunit protein uL2 from Dictyoglomus thermophilum (strain ATCC 35947 / DSM 3960 / H-6-12).